The chain runs to 171 residues: Peptide deformylase (171 aa).

Residues Cys-91 and His-133 each coordinate Fe cation. Residue Glu-134 is part of the active site. A Fe cation-binding site is contributed by His-137.

The protein belongs to the polypeptide deformylase family. It depends on Fe(2+) as a cofactor.

It carries out the reaction N-terminal N-formyl-L-methionyl-[peptide] + H2O = N-terminal L-methionyl-[peptide] + formate. Removes the formyl group from the N-terminal Met of newly synthesized proteins. Requires at least a dipeptide for an efficient rate of reaction. N-terminal L-methionine is a prerequisite for activity but the enzyme has broad specificity at other positions. The polypeptide is Peptide deformylase (Hamiltonella defensa subsp. Acyrthosiphon pisum (strain 5AT)).